The chain runs to 209 residues: rRNA N(6)-adenosine-methyltransferase METTL5 (209 aa).

S-adenosyl-L-methionine contacts are provided by residues Gln-28, Thr-31, Gly-59, Cys-62, Val-64, Asp-81, and 108–109 (DV).

The protein belongs to the methyltransferase superfamily. PrmA family. Heterodimer; heterodimerizes with TRMT112. Ubiquitously expressed in brain.

The protein resides in the nucleus. Its subcellular location is the presynapse. It is found in the postsynapse. It catalyses the reaction adenosine(1832) in 18S rRNA + S-adenosyl-L-methionine = N(6)-methyladenosine(1832) in 18S rRNA + S-adenosyl-L-homocysteine + H(+). Its activity is regulated as follows. rRNA N6-adenosine-methyltransferase activity is inhibited by zinc. Its function is as follows. Catalytic subunit of a heterodimer with TRMT112, which specifically methylates the 6th position of adenine in position 1832 of 18S rRNA. N6-methylation of adenine(1832) in 18S rRNA resides in the decoding center of 18S rRNA and is required for translation and embryonic stem cells (ESCs) pluripotency and differentiation. This chain is rRNA N(6)-adenosine-methyltransferase METTL5, found in Mus musculus (Mouse).